Consider the following 635-residue polypeptide: Biosynthetic arginine decarboxylase (635 aa).

At lysine 103 the chain carries N6-(pyridoxal phosphate)lysine. A substrate-binding site is contributed by 283–293 (FDVGGGLGVDY).

It belongs to the Orn/Lys/Arg decarboxylase class-II family. SpeA subfamily. It depends on Mg(2+) as a cofactor. Pyridoxal 5'-phosphate serves as cofactor.

The catalysed reaction is L-arginine + H(+) = agmatine + CO2. It functions in the pathway amine and polyamine biosynthesis; agmatine biosynthesis; agmatine from L-arginine: step 1/1. In terms of biological role, catalyzes the biosynthesis of agmatine from arginine. In Proteus mirabilis (strain HI4320), this protein is Biosynthetic arginine decarboxylase.